A 373-amino-acid chain; its full sequence is Probable G-protein coupled receptor 45 (373 aa).

Residues 1–38 (MACNSTPMGTYEHLLLNVSNTLDPGDTPLSAPLRISLA) are Extracellular-facing. Asn-17 carries an N-linked (GlcNAc...) asparagine glycan. A helical transmembrane segment spans residues 39–59 (IMMLLMIVVGFLGNTVVCIIV). Residues 60-75 (YQRPAMRSAINLLLAT) lie on the Cytoplasmic side of the membrane. A helical transmembrane segment spans residues 76 to 96 (LAFSDIMLSLCCMPFTAITLI). Residues 97 to 109 (TVRWHFGDHFCRL) lie on the Extracellular side of the membrane. Residues 110–130 (SATLYWFFVLEGVAILLIISV) form a helical membrane-spanning segment. At 131 to 149 (DRFLIIVQRQDKLNPRRAK) the chain is on the cytoplasmic side. The helical transmembrane segment at 150 to 170 (MIIAASWVLSFCISAPSFTGW) threads the bilayer. The Extracellular portion of the chain corresponds to 171-198 (TFMEVPARAPQCVLGYTEFPAERAYVVT). Residues 199-219 (LVVAVFFAPFGVMLCSYLCIL) traverse the membrane as a helical segment. Over 220 to 269 (NTVRKNAVRVHNQSDSLDLRQLTGAGLRRLRRQQQQASLDLSFKTKAFTT) the chain is Cytoplasmic. A helical transmembrane segment spans residues 270 to 290 (ILILFVGFSLCWLPHSVYSLL). Topologically, residues 291–306 (SAFSRRFYYSASFYTT) are extracellular. A helical transmembrane segment spans residues 307-327 (STCVLWLSYLKSVFNPIVYCW). Residues 328-373 (RIKKFREACIELLPHTFQILPKVPERIQRKIQPSTIYVCNENQSAV) are Cytoplasmic-facing.

This sequence belongs to the G-protein coupled receptor 1 family. Brain specific.

Its subcellular location is the cell membrane. In terms of biological role, orphan receptor. May play a role in brain function. In Mus musculus (Mouse), this protein is Probable G-protein coupled receptor 45 (Gpr45).